A 258-amino-acid polypeptide reads, in one-letter code: Acyl-[acyl-carrier-protein]--UDP-N-acetylglucosamine O-acyltransferase (258 aa).

It belongs to the transferase hexapeptide repeat family. LpxA subfamily. Homotrimer.

It is found in the cytoplasm. The enzyme catalyses a (3R)-hydroxyacyl-[ACP] + UDP-N-acetyl-alpha-D-glucosamine = a UDP-3-O-[(3R)-3-hydroxyacyl]-N-acetyl-alpha-D-glucosamine + holo-[ACP]. It functions in the pathway glycolipid biosynthesis; lipid IV(A) biosynthesis; lipid IV(A) from (3R)-3-hydroxytetradecanoyl-[acyl-carrier-protein] and UDP-N-acetyl-alpha-D-glucosamine: step 1/6. Involved in the biosynthesis of lipid A, a phosphorylated glycolipid that anchors the lipopolysaccharide to the outer membrane of the cell. This is Acyl-[acyl-carrier-protein]--UDP-N-acetylglucosamine O-acyltransferase from Saccharophagus degradans (strain 2-40 / ATCC 43961 / DSM 17024).